The following is a 419-amino-acid chain: Serine hydroxymethyltransferase (419 aa).

Residues Leu121 and 125 to 127 contribute to the (6S)-5,6,7,8-tetrahydrofolate site; that span reads GHL. Lys230 bears the N6-(pyridoxal phosphate)lysine mark. Position 355–357 (355–357) interacts with (6S)-5,6,7,8-tetrahydrofolate; it reads SPF.

The protein belongs to the SHMT family. In terms of assembly, homodimer. The cofactor is pyridoxal 5'-phosphate.

It localises to the cytoplasm. It catalyses the reaction (6R)-5,10-methylene-5,6,7,8-tetrahydrofolate + glycine + H2O = (6S)-5,6,7,8-tetrahydrofolate + L-serine. It functions in the pathway one-carbon metabolism; tetrahydrofolate interconversion. The protein operates within amino-acid biosynthesis; glycine biosynthesis; glycine from L-serine: step 1/1. Its function is as follows. Catalyzes the reversible interconversion of serine and glycine with tetrahydrofolate (THF) serving as the one-carbon carrier. This reaction serves as the major source of one-carbon groups required for the biosynthesis of purines, thymidylate, methionine, and other important biomolecules. Also exhibits THF-independent aldolase activity toward beta-hydroxyamino acids, producing glycine and aldehydes, via a retro-aldol mechanism. The sequence is that of Serine hydroxymethyltransferase from Streptococcus equi subsp. zooepidemicus (strain H70).